The primary structure comprises 62 residues: Beta-defensin 33 (62 aa).

The first 20 residues, 1-20, serve as a signal peptide directing secretion; that stretch reads MRLLFLLFLLLVCLAQKTSG. 3 disulfide bridges follow: Cys30–Cys59, Cys37–Cys52, and Cys45–Cys60.

The protein belongs to the beta-defensin family.

The protein resides in the secreted. Functionally, has antibacterial activity. The sequence is that of Beta-defensin 33 (Defb33) from Rattus norvegicus (Rat).